The following is a 146-amino-acid chain: Late protein H7 (146 aa).

Residues 10–32 form a helical membrane-spanning segment; sequence LAMTAFFGELNTLDIMALIMSIF.

This sequence belongs to the chordopoxvirinae H7 family.

It localises to the membrane. Its function is as follows. Contributes to the formation of crescents and immature virions (IV). This chain is Late protein H7, found in Vaccinia virus (strain Tian Tan) (VACV).